A 326-amino-acid polypeptide reads, in one-letter code: MFRLTLLLAYVACVYGGGAPYGADRGKCRGNDYEKDGLCCTSCPPGSYASRLCGPGSDTVCSPCKNETFTASTNHAPACVSCRGRCTGHLSESQSCDKTRDRVCDCSAGNYCLLKGQEGCRICAPKTKCPAGYGVSGHTRTGDVLCTKCPRYTYSDAVSSTETCTSSFNYISVEFNLYPVNDTSCTTTAGPNEVVKTSEFSVTLNHTDCDPVFHTEYYGTSGSEGAGGFFTGMDRYQNTTKMCTLNIEIRCVEGDAVRTIPRTSDGVGVLSHSETITVIGGCLSDVNVDIEYSDSNHPEEVDDFVEYHWGTRLRLFPSPKRCRLVS.

An N-terminal signal peptide occupies residues 1-16 (MFRLTLLLAYVACVYG). TNFR-Cys repeat units lie at residues 27 to 62 (KCRG…TVCS), 63 to 104 (PCKN…DRVC), 105 to 147 (DCSA…VLCT), and 148 to 186 (KCPR…TSCT). Cystine bridges form between Cys-28–Cys-39, Cys-40–Cys-53, Cys-43–Cys-61, Cys-64–Cys-79, Cys-82–Cys-96, Cys-86–Cys-104, Cys-106–Cys-120, Cys-123–Cys-146, Cys-129–Cys-149, and Cys-164–Cys-185. Asn-66 is a glycosylation site (N-linked (GlcNAc...) asparagine; by host). 3 N-linked (GlcNAc...) asparagine; by host glycosylation sites follow: Asn-181, Asn-205, and Asn-238.

Binds to TNF-alpha and beta. Probably prevents TNF to reach cellular target and thereby deampening the potential antiviral effects of the cytokine. The sequence is that of Tumor necrosis factor soluble receptor from Oryctolagus cuniculus (Rabbit).